A 567-amino-acid chain; its full sequence is Urease subunit alpha (567 aa).

Residues 129-567 (GGIDAHIHFI…LPLAQRYFLF (439 aa)) enclose the Urease domain. Positions 134, 136, and 217 each coordinate Ni(2+). At Lys-217 the chain carries N6-carboxylysine. A substrate-binding site is contributed by His-219. Ni(2+) contacts are provided by His-246 and His-272. Residue His-320 is the Proton donor of the active site. Residue Asp-360 coordinates Ni(2+).

It belongs to the metallo-dependent hydrolases superfamily. Urease alpha subunit family. Heterotrimer of UreA (gamma), UreB (beta) and UreC (alpha) subunits. Three heterotrimers associate to form the active enzyme. It depends on Ni cation as a cofactor. In terms of processing, carboxylation allows a single lysine to coordinate two nickel ions.

It localises to the cytoplasm. It carries out the reaction urea + 2 H2O + H(+) = hydrogencarbonate + 2 NH4(+). It participates in nitrogen metabolism; urea degradation; CO(2) and NH(3) from urea (urease route): step 1/1. The protein is Urease subunit alpha of Hahella chejuensis (strain KCTC 2396).